The sequence spans 210 residues: Rho-related GTP-binding protein RhoD (210 aa).

GTP is bound at residue 24 to 31 (GDGGCGKT). An Effector region motif is present at residues 46 to 54 (YSPTVFERY). Residues 71–75 (DTAGQ) and 129–132 (CKID) each bind GTP. Cysteine 207 is subject to Cysteine methyl ester. Cysteine 207 carries the S-geranylgeranyl cysteine lipid modification. A propeptide spans 208-210 (LAT) (removed in mature form).

Belongs to the small GTPase superfamily. Rho family. As to quaternary structure, interacts with PAK5. Interacts (in GTP-bound form) with DAPK3, FILIP1 and WHAMM. Interacts (independent of GTP-loaded status) with ANKFY1. As to expression, widely expressed.

It localises to the cell membrane. It is found in the early endosome. Functionally, involved in endosome dynamics. May coordinate membrane transport with the function of the cytoskeleton. Involved in the internalization and trafficking of activated tyrosine kinase receptors such as PDGFRB. Participates in the reorganization of actin cytoskeleton; the function seems to involve WHAMM and includes regulation of filopodia formation and actin filament bundling. Can modulate the effect of DAPK3 in reorganization of actin cytoskeleton and focal adhesion dissolution. This chain is Rho-related GTP-binding protein RhoD (Rhod), found in Mus musculus (Mouse).